The following is a 96-amino-acid chain: Phosphoribosyl-ATP pyrophosphatase (96 aa).

It belongs to the PRA-PH family.

The protein resides in the cytoplasm. The catalysed reaction is 1-(5-phospho-beta-D-ribosyl)-ATP + H2O = 1-(5-phospho-beta-D-ribosyl)-5'-AMP + diphosphate + H(+). Its pathway is amino-acid biosynthesis; L-histidine biosynthesis; L-histidine from 5-phospho-alpha-D-ribose 1-diphosphate: step 2/9. This chain is Phosphoribosyl-ATP pyrophosphatase, found in Methanococcus vannielii (strain ATCC 35089 / DSM 1224 / JCM 13029 / OCM 148 / SB).